A 630-amino-acid polypeptide reads, in one-letter code: Plastin-3 (630 aa).

EF-hand domains follow at residues 12–47 (DELDELKEAFAKVDLNSNGFICDYELHELFKEANMP) and 52–87 (KVREIIQKLMLDGDRNKDGKISFDEFVYIFQEVKSS). 9 residues coordinate Ca(2+): aspartate 25, asparagine 27, asparagine 29, glutamate 36, aspartate 65, asparagine 67, aspartate 69, lysine 71, and glutamate 76. Actin-binding stretches follow at residues 109–382 (TSEL…ALTK) and 383–627 (PENQ…GRGM). Calponin-homology (CH) domains follow at residues 123 to 239 (EEEK…KIGL) and 267 to 378 (LSPE…NKYP). 4 positions are modified to phosphoserine: serine 268, serine 293, serine 326, and serine 339. Threonine 391 carries the phosphothreonine modification. Calponin-homology (CH) domains are found at residues 397 to 506 (TREE…RRYT) and 518 to 627 (KAND…GRGM).

Monomer.

It localises to the cytoplasm. Actin-bundling protein. The sequence is that of Plastin-3 (PLS3) from Bos taurus (Bovine).